A 722-amino-acid chain; its full sequence is D-(-)-3-hydroxybutyrate oligomer hydrolase (722 aa).

The span at 1–11 (MQQRHLSQSAH) shows a compositional bias: polar residues. The segment at 1–20 (MQQRHLSQSAHSHGHGTRRA) is disordered. Positions 1 to 36 (MQQRHLSQSAHSHGHGTRRAHRRNTIAIAVATLAVA) are cleaved as a signal peptide. Residue S327 is the Charge relay system of the active site. A disordered region spans residues 671-697 (PPSQVVRTTPRGGADTDTVGPRIQPSN).

Belongs to the D-(-)-3-hydroxybutyrate oligomer hydrolase family.

The protein resides in the secreted. It carries out the reaction (3R)-hydroxybutanoate dimer + H2O = 2 (R)-3-hydroxybutanoate + H(+). It participates in lipid metabolism; butanoate metabolism. In terms of biological role, participates in the degradation of poly-3-hydroxybutyrate (PHB). It works downstream of poly(3-hydroxybutyrate) depolymerase, hydrolyzing D(-)-3-hydroxybutyrate oligomers of various length (3HB-oligomers) into 3HB-monomers. The chain is D-(-)-3-hydroxybutyrate oligomer hydrolase from Cupriavidus metallidurans (strain ATCC 43123 / DSM 2839 / NBRC 102507 / CH34) (Ralstonia metallidurans).